Reading from the N-terminus, the 480-residue chain is MPAGSILVADDDTAIRTVLNQALSRAGYEVRLTGNAATLWRWVSQGEGDLVITDVVMPDENAFDLLPRIKKMRPNLPVIVMSAQNTFMTAIRPSERGAYEYLPKPFDLKELITIVGRALAEPKERVSSPADDGEFDSIPLVGRSPAMQEIYRVLARLMQTDLTVMISGESGTGKELVARALHDYGRRRNGPFVAVNMAAIPRDLIESELFGHERGAFTGANTRASGRFEQAEGGTLFLDEIGDMPMEAQTRLLRVLQQGEYTTVGGRTPIKTDVRIVAASNKDLRILIQQGLFREDLFFRLNVVPLRVPPLRERIEDLPDLIRHFFSLAEKDGLPPKKLDAQALERLKQHRWPGNVRELENLARRLAALYPQDVITASVIDGELAPPAVTSGSTATVGVDNLGGAVEAYLSSHFSGFPNGVPPPGLYHRILKEIEIPLLTAALAATRGNQIRAADLLGLNRNTLRKKIRDLDIQVYRSGG.

The 115-residue stretch at 5–119 (SILVADDDTA…ELITIVGRAL (115 aa)) folds into the Response regulatory domain. Aspartate 54 carries the 4-aspartylphosphate modification. The Sigma-54 factor interaction domain occupies 140 to 368 (LVGRSPAMQE…LENLARRLAA (229 aa)). Residues 168–175 (GESGTGKE) and 231–240 (AEGGTLFLDE) contribute to the ATP site. The segment at residues 450 to 469 (QIRAADLLGLNRNTLRKKIR) is a DNA-binding region (H-T-H motif).

Phosphorylated and dephosphorylated by NtrB.

The protein resides in the cytoplasm. Member of the two-component regulatory system NtrB/NtrC, which controls expression of the nitrogen-regulated (ntr) genes in response to nitrogen limitation. Phosphorylated NtrC binds directly to DNA and stimulates the formation of open promoter-sigma54-RNA polymerase complexes. The sequence is that of DNA-binding transcriptional regulator NtrC (ntrC) from Bradyrhizobium sp. (strain RP501 Parasponia).